Reading from the N-terminus, the 386-residue chain is S-(hydroxymethyl)glutathione dehydrogenase (386 aa).

Position 2 is an N-acetylserine (serine 2). Cysteine 49 provides a ligand contact to Zn(2+). Position 50 (histidine 50) interacts with NAD(+). Positions 71, 72, 101, 104, 107, 115, and 179 each coordinate Zn(2+). NAD(+) is bound by residues 204–209 (GCGTVG), aspartate 228, 300–302 (IGV), and 325–327 (SAF).

It belongs to the zinc-containing alcohol dehydrogenase family. Class-III subfamily. Requires Zn(2+) as cofactor.

Its subcellular location is the cytoplasm. The protein localises to the mitochondrion. It catalyses the reaction a primary alcohol + NAD(+) = an aldehyde + NADH + H(+). It carries out the reaction a secondary alcohol + NAD(+) = a ketone + NADH + H(+). The catalysed reaction is S-(hydroxymethyl)glutathione + NADP(+) = S-formylglutathione + NADPH + H(+). The enzyme catalyses S-(hydroxymethyl)glutathione + NAD(+) = S-formylglutathione + NADH + H(+). It catalyses the reaction S-nitrosoglutathione + NADH + H(+) = S-(hydroxysulfenamide)glutathione + NAD(+). Its function is as follows. Oxidizes long-chain alcohols and, in the presence of glutathione, is able to oxidize formaldehyde. Is responsible for yeast resistance to formaldehyde. Also acts as a S-nitroso-glutathione reductase by catalyzing the NADH-dependent reduction of S-nitrosoglutathione, thereby regulating protein S-nitrosylation. The chain is S-(hydroxymethyl)glutathione dehydrogenase (SFA1) from Saccharomyces cerevisiae (strain ATCC 204508 / S288c) (Baker's yeast).